The following is a 137-amino-acid chain: Nucleoside diphosphate kinase (137 aa).

ATP is bound by residues K10, F58, R86, T92, R103, and N113. The Pros-phosphohistidine intermediate role is filled by H116.

Belongs to the NDK family. As to quaternary structure, homotetramer. The cofactor is Mg(2+).

It localises to the cytoplasm. The catalysed reaction is a 2'-deoxyribonucleoside 5'-diphosphate + ATP = a 2'-deoxyribonucleoside 5'-triphosphate + ADP. It catalyses the reaction a ribonucleoside 5'-diphosphate + ATP = a ribonucleoside 5'-triphosphate + ADP. Functionally, major role in the synthesis of nucleoside triphosphates other than ATP. The ATP gamma phosphate is transferred to the NDP beta phosphate via a ping-pong mechanism, using a phosphorylated active-site intermediate. The chain is Nucleoside diphosphate kinase from Helicobacter pylori (strain G27).